Consider the following 296-residue polypeptide: Fructose-bisphosphate aldolase class 1 (296 aa).

Glu-175 acts as the Proton acceptor in catalysis. Lys-212 acts as the Schiff-base intermediate with dihydroxyacetone-P in catalysis.

The protein belongs to the class I fructose-bisphosphate aldolase family.

The catalysed reaction is beta-D-fructose 1,6-bisphosphate = D-glyceraldehyde 3-phosphate + dihydroxyacetone phosphate. Its pathway is carbohydrate degradation; glycolysis; D-glyceraldehyde 3-phosphate and glycerone phosphate from D-glucose: step 4/4. The chain is Fructose-bisphosphate aldolase class 1 from Staphylococcus aureus (strain MRSA252).